Reading from the N-terminus, the 464-residue chain is 26S proteasome regulatory subunit 7 homolog B (464 aa).

Residue 246–253 (GPPGSGKT) participates in ATP binding. A Glycyl lysine isopeptide (Lys-Gly) (interchain with G-Cter in ubiquitin) cross-link involves residue lysine 452.

Belongs to the AAA ATPase family. As to quaternary structure, component of the 19S regulatory particle (RP/PA700) base subcomplex of the 26S proteasome. The 26S proteasome is composed of a core protease (CP), known as the 20S proteasome, capped at one or both ends by the 19S regulatory particle (RP/PA700). The RP/PA700 complex is composed of at least 17 different subunits in two subcomplexes, the base and the lid, which form the portions proximal and distal to the 20S proteolytic core, respectively.

The protein localises to the cytoplasm. Its subcellular location is the nucleus. Functionally, the 26S proteasome is involved in the ATP-dependent degradation of ubiquitinated proteins. The regulatory (or ATPase) complex confers ATP dependency and substrate specificity to the 26S complex. This Arabidopsis thaliana (Mouse-ear cress) protein is 26S proteasome regulatory subunit 7 homolog B (RPT1B).